The following is a 204-amino-acid chain: Heart- and neural crest derivatives-expressed protein 1 (204 aa).

Disordered stretches follow at residues 1 to 24 (MNLV…HPAH), 57 to 115 (APDF…RTES), and 172 to 204 (LKKA…EKRD). Basic residues-rich tracts occupy residues 8–22 (AHHH…HPHP) and 98–110 (LGRR…KKER). In terms of domain architecture, bHLH spans 100–152 (RRKGSGPKKERRRTESINSAFAELRECIPNVPADTKLSKIKTLRLATSYIAYL). The residue at position 113 (T113) is a Phosphothreonine; by PLK4. The residue at position 115 (S115) is a Phosphoserine; by PLK4.

In terms of assembly, efficient DNA binding requires dimerization with another bHLH protein. Forms homodimers and heterodimers with TCF3 gene products E12 and E47, HAND2 and HEY1, HEY2 and HEYL (hairy-related transcription factors). Interacts with MDFIC. Interacts with SOX15; the interaction enhances HAND1-induced differentiation of trophoblast giant cells. Phosphorylation by PLK4 disrupts the interaction with MDFIC and leads to translocation into the nucleoplasm, allowing dimerization and transcription factor activity.

Its subcellular location is the nucleus. The protein localises to the nucleoplasm. The protein resides in the nucleolus. Transcription factor that plays an essential role in both trophoblast giant cell differentiation and in cardiac morphogenesis. Binds the DNA sequence 5'-NRTCTG-3' (non-canonical E-box). Acts as a transcriptional repressor of SOX15. In the adult, could be required for ongoing expression of cardiac-specific genes. The chain is Heart- and neural crest derivatives-expressed protein 1 (HAND1) from Ovis aries (Sheep).